Consider the following 537-residue polypeptide: Beta-hexosaminidase subunit beta (537 aa).

Positions 1-23 (MPGSPRRAPGLLLQALVAMVSLA) are cleaved as a signal peptide. The N-linked (GlcNAc...) asparagine glycan is linked to asparagine 62. A disulfide bridge connects residues cysteine 69 and cysteine 115. N-linked (GlcNAc...) asparagine glycosylation is found at asparagine 168 and asparagine 305. 2 disulfide bridges follow: cysteine 287–cysteine 338 and cysteine 512–cysteine 529. Glutamate 333 acts as the Proton donor in catalysis.

The protein belongs to the glycosyl hydrolase 20 family. As to quaternary structure, there are 3 forms of beta-hexosaminidase: hexosaminidase A is a heterodimer composed of one subunit alpha and one subunit beta (chain A and B); hexosaminidase B is a homodimer of two beta subunits (two chains A and B); hexosaminidase S is a homodimer of two alpha subunits. The composition of the dimer (isozyme A versus isozyme S) has a significant effect on the substrate specificity of the alpha subunit active site.

It is found in the lysosome. The protein localises to the cytoplasmic vesicle. It localises to the secretory vesicle. Its subcellular location is the cortical granule. It catalyses the reaction Hydrolysis of terminal non-reducing N-acetyl-D-hexosamine residues in N-acetyl-beta-D-hexosaminides.. The enzyme catalyses N-acetyl-beta-D-galactosaminyl-(1-&gt;4)-beta-D-3-sulfogalactosyl-(1-&gt;4)-beta-D-glucosyl-(1&lt;-&gt;1')-ceramide + H2O = a beta-D-3-sulfogalactosyl-(1-&gt;4)-beta-D-glucosyl-(1&lt;-&gt;1')-ceramide + N-acetyl-beta-D-galactosamine. The catalysed reaction is a ganglioside GM2 (d18:1(4E)) + H2O = a ganglioside GM3 (d18:1(4E)) + N-acetyl-beta-D-galactosamine. It carries out the reaction a ganglioside GM2 + H2O = a ganglioside GM3 + N-acetyl-beta-D-galactosamine. It catalyses the reaction beta-D-GalNAc-(1-&gt;4)-alpha-L-IdoA-(1-&gt;3)-beta-D-GalNAc-4-sulfate-(1-&gt;4)-alpha-L-IdoA-(1-&gt;3)-D-GalNAc-4-sulfate + H2O = alpha-L-IdoA-(1-&gt;3)-beta-D-GalNAc-4-sulfate-(1-&gt;4)-alpha-L-IdoA-(1-&gt;3)-D-GalNAc-4-sulfate + N-acetyl-D-galactosamine. The enzyme catalyses N-acetyl-beta-D-6-sulfogalactosaminyl-(1-&gt;4)-alpha-L-iduronyl-(1-&gt;3)-N-acetyl-D-6-sulfogalactosamine + H2O = alpha-L-iduronyl-(1-&gt;3)-N-acetyl-D-6-sulfogalactosamine + N-acetyl-D-6-sulfogalactosamine. With respect to regulation, addition of GM2A stimulates the hydrolysis of sulfated glycosphingolipid SM2 and the ganglioside GM2. Its function is as follows. Hydrolyzes the non-reducing end N-acetyl-D-hexosamine and/or sulfated N-acetyl-D-hexosamine of glycoconjugates, such as the oligosaccharide moieties from proteins and neutral glycolipids, or from certain mucopolysaccharides. The isozyme B does not hydrolyze each of these substrates, however hydrolyzes efficiently neutral oligosaccharide. Only the isozyme A is responsible for the degradation of GM2 gangliosides in the presence of GM2A. During fertilization is responsible, at least in part, for the zona block to polyspermy. Present in the cortical granules of non-activated oocytes, is exocytosed during the cortical reaction in response to oocyte activation and inactivates the sperm galactosyltransferase-binding site, accounting for the block in sperm binding to the zona pellucida. In Rattus norvegicus (Rat), this protein is Beta-hexosaminidase subunit beta.